A 96-amino-acid polypeptide reads, in one-letter code: Co-chaperonin GroES 2 (96 aa).

This sequence belongs to the GroES chaperonin family. In terms of assembly, heptamer of 7 subunits arranged in a ring. Interacts with the chaperonin GroEL.

Its subcellular location is the cytoplasm. In terms of biological role, together with the chaperonin GroEL, plays an essential role in assisting protein folding. The GroEL-GroES system forms a nano-cage that allows encapsulation of the non-native substrate proteins and provides a physical environment optimized to promote and accelerate protein folding. GroES binds to the apical surface of the GroEL ring, thereby capping the opening of the GroEL channel. The chain is Co-chaperonin GroES 2 from Vibrio vulnificus (strain CMCP6).